Consider the following 259-residue polypeptide: Ribonuclease PH (259 aa).

Phosphate is bound by residues R88 and 126-128; that span reads GTR.

Belongs to the RNase PH family. Homohexameric ring arranged as a trimer of dimers.

The catalysed reaction is tRNA(n+1) + phosphate = tRNA(n) + a ribonucleoside 5'-diphosphate. In terms of biological role, phosphorolytic 3'-5' exoribonuclease that plays an important role in tRNA 3'-end maturation. Removes nucleotide residues following the 3'-CCA terminus of tRNAs; can also add nucleotides to the ends of RNA molecules by using nucleoside diphosphates as substrates, but this may not be physiologically important. Probably plays a role in initiation of 16S rRNA degradation (leading to ribosome degradation) during starvation. In Mycobacterium bovis (strain BCG / Pasteur 1173P2), this protein is Ribonuclease PH.